A 389-amino-acid polypeptide reads, in one-letter code: Arginine biosynthesis bifunctional protein ArgJ (389 aa).

Thr-150, Lys-173, Thr-184, Glu-263, Asn-384, and Thr-389 together coordinate substrate. Catalysis depends on Thr-184, which acts as the Nucleophile.

The protein belongs to the ArgJ family. As to quaternary structure, heterotetramer of two alpha and two beta chains.

It is found in the cytoplasm. The enzyme catalyses N(2)-acetyl-L-ornithine + L-glutamate = N-acetyl-L-glutamate + L-ornithine. It catalyses the reaction L-glutamate + acetyl-CoA = N-acetyl-L-glutamate + CoA + H(+). It participates in amino-acid biosynthesis; L-arginine biosynthesis; L-ornithine and N-acetyl-L-glutamate from L-glutamate and N(2)-acetyl-L-ornithine (cyclic): step 1/1. It functions in the pathway amino-acid biosynthesis; L-arginine biosynthesis; N(2)-acetyl-L-ornithine from L-glutamate: step 1/4. Its function is as follows. Catalyzes two activities which are involved in the cyclic version of arginine biosynthesis: the synthesis of N-acetylglutamate from glutamate and acetyl-CoA as the acetyl donor, and of ornithine by transacetylation between N(2)-acetylornithine and glutamate. In Deinococcus radiodurans (strain ATCC 13939 / DSM 20539 / JCM 16871 / CCUG 27074 / LMG 4051 / NBRC 15346 / NCIMB 9279 / VKM B-1422 / R1), this protein is Arginine biosynthesis bifunctional protein ArgJ.